The chain runs to 325 residues: Replication factor C small subunit (325 aa).

45–52 contacts ATP; the sequence is GPPGTGKT.

Belongs to the activator 1 small subunits family. RfcS subfamily. In terms of assembly, heteromultimer composed of small subunits (RfcS) and large subunits (RfcL).

Its function is as follows. Part of the RFC clamp loader complex which loads the PCNA sliding clamp onto DNA. This chain is Replication factor C small subunit, found in Sulfolobus acidocaldarius (strain ATCC 33909 / DSM 639 / JCM 8929 / NBRC 15157 / NCIMB 11770).